The sequence spans 412 residues: Argininosuccinate synthase (412 aa).

ATP contacts are provided by residues 20–28 and Ala-48; that span reads AYSGGLDTS. L-citrulline-binding residues include Tyr-100 and Ser-105. ATP is bound at residue Gly-130. Residues Thr-132, Asn-136, and Asp-137 each contribute to the L-aspartate site. Asn-136 contributes to the L-citrulline binding site. Positions 140, 189, 198, 274, and 286 each coordinate L-citrulline.

The protein belongs to the argininosuccinate synthase family. Type 1 subfamily. As to quaternary structure, homotetramer.

The protein localises to the cytoplasm. It carries out the reaction L-citrulline + L-aspartate + ATP = 2-(N(omega)-L-arginino)succinate + AMP + diphosphate + H(+). It participates in amino-acid biosynthesis; L-arginine biosynthesis; L-arginine from L-ornithine and carbamoyl phosphate: step 2/3. This is Argininosuccinate synthase from Shewanella halifaxensis (strain HAW-EB4).